We begin with the raw amino-acid sequence, 191 residues long: Ion-translocating oxidoreductase complex subunit B (191 aa).

Residues 1–26 form a hydrophobic region; it reads MSSLWIAIAAVSAIALVSGLILGFAA. The 59-residue stretch at 32–90 folds into the 4Fe-4S domain; that stretch reads EADPIVERIDALLPQSQCGQCGYPGCRPYAEAVANGEKINRCAPGGEAVMRNIAALLAV. 12 residues coordinate [4Fe-4S] cluster: cysteine 49, cysteine 52, cysteine 57, cysteine 73, cysteine 116, cysteine 119, cysteine 122, cysteine 126, cysteine 146, cysteine 149, cysteine 152, and cysteine 156. 4Fe-4S ferredoxin-type domains follow at residues 107–136 and 137–166; these read QVALIDEANCIGCTKCIQSCPVDAIVGATR and ALHTVISDQCTGCGLCLPPCPTSCIQLVPV.

Belongs to the 4Fe4S bacterial-type ferredoxin family. RnfB subfamily. The complex is composed of six subunits: RnfA, RnfB, RnfC, RnfD, RnfE and RnfG. It depends on [4Fe-4S] cluster as a cofactor.

The protein localises to the cell inner membrane. Its function is as follows. Part of a membrane-bound complex that couples electron transfer with translocation of ions across the membrane. The chain is Ion-translocating oxidoreductase complex subunit B from Edwardsiella ictaluri (strain 93-146).